The primary structure comprises 347 residues: MEFCVLFGGASFEHEISIVSAIALKGVLKDRIKYFIFLDENHYFYLIEESNMHSKYFAQIKEKKLPPLILTHNGLLKNSFLGAKIIELPLVINLVHGGDGEDGKLASLLEFYRIAFIGPRVEASVLSYNKYLTKLYAKDLGVKALDYVLLNEKNRANALDLIGFNFPFIVKPSNAGSSLGVNVVKEEKELIYALDSAFEYSKEVLIEPFIQGVKEYNLAGCKIKKGFCFSYVEEPNKQEFLDFKQKYLDFSRTKAPKANLSNALEEQLKENFKKLYNDLFDGAIIRCDFFVIENEVYLNEINPIPGSLANYLFDDFKTTLENLAQSLPKTPKIQVKNSYLLQIQKNK.

Residues 134-332 (KLYAKDLGVK…LAQSLPKTPK (199 aa)) enclose the ATP-grasp domain. 161–216 (LIGFNFPFIVKPSNAGSSLGVNVVKEEKELIYALDSAFEYSKEVLIEPFIQGVKEY) is an ATP binding site. Positions 288, 300, and 302 each coordinate Mg(2+).

Belongs to the D-alanine--D-alanine ligase family. Requires Mg(2+) as cofactor. Mn(2+) serves as cofactor.

Its subcellular location is the cytoplasm. The enzyme catalyses 2 D-alanine + ATP = D-alanyl-D-alanine + ADP + phosphate + H(+). The protein operates within cell wall biogenesis; peptidoglycan biosynthesis. Its function is as follows. Cell wall formation. The polypeptide is D-alanine--D-alanine ligase (Helicobacter pylori (strain J99 / ATCC 700824) (Campylobacter pylori J99)).